We begin with the raw amino-acid sequence, 178 residues long: MQDQDKYAEQAASMEEPASADAPAIVPTLEEQLAASQLQVQELQDSFLRAKAENENFRRRAQEDVTRAHKFAIEGFAEALVPVKDSLEMALQVDTPSIASLKEGVEMTLKQLSAAFEKNRLLEIKPQQGDKLDPMKHQAISVVPADQEANTIVSTLQKGYLIADRLLRPALVTVAQEK.

The tract at residues 1–26 (MQDQDKYAEQAASMEEPASADAPAIV) is disordered.

Belongs to the GrpE family. In terms of assembly, homodimer.

It localises to the cytoplasm. Participates actively in the response to hyperosmotic and heat shock by preventing the aggregation of stress-denatured proteins, in association with DnaK and GrpE. It is the nucleotide exchange factor for DnaK and may function as a thermosensor. Unfolded proteins bind initially to DnaJ; upon interaction with the DnaJ-bound protein, DnaK hydrolyzes its bound ATP, resulting in the formation of a stable complex. GrpE releases ADP from DnaK; ATP binding to DnaK triggers the release of the substrate protein, thus completing the reaction cycle. Several rounds of ATP-dependent interactions between DnaJ, DnaK and GrpE are required for fully efficient folding. This Herminiimonas arsenicoxydans protein is Protein GrpE.